An 82-amino-acid polypeptide reads, in one-letter code: EMBRYO SURROUNDING FACTOR 1-like protein 10 (82 aa).

A signal peptide spans 1–22 (MSSLYFAILCLFMIFLVPLHEF). 4 disulfide bridges follow: Cys-39-Cys-55, Cys-44-Cys-74, Cys-53-Cys-70, and Cys-56-Cys-63.

It belongs to the MEG family. Expressed in stems, leaves and flowers.

The protein is EMBRYO SURROUNDING FACTOR 1-like protein 10 (ESFL10) of Arabidopsis thaliana (Mouse-ear cress).